We begin with the raw amino-acid sequence, 230 residues long: UPF0758 protein Glov_0523 (230 aa).

In terms of domain architecture, MPN spans 108–230; it reads RFTSPAQVFD…YFSFVESGLL (123 aa). His179, His181, and Asp192 together coordinate Zn(2+). Residues 179–192 carry the JAMM motif motif; that stretch reads HNHPSGDPAPSRED.

Belongs to the UPF0758 family.

The protein is UPF0758 protein Glov_0523 of Trichlorobacter lovleyi (strain ATCC BAA-1151 / DSM 17278 / SZ) (Geobacter lovleyi).